The chain runs to 155 residues: Ribonuclease H (155 aa).

The region spanning 1 to 146 (MNALFAWTDG…ADELARAGMA (146 aa)) is the RNase H type-1 domain. Residues aspartate 9, glutamate 52, aspartate 74, and aspartate 138 each coordinate Mg(2+).

This sequence belongs to the RNase H family. Monomer. It depends on Mg(2+) as a cofactor.

Its subcellular location is the cytoplasm. It carries out the reaction Endonucleolytic cleavage to 5'-phosphomonoester.. Functionally, endonuclease that specifically degrades the RNA of RNA-DNA hybrids. This is Ribonuclease H from Paracoccus denitrificans (strain Pd 1222).